Reading from the N-terminus, the 245-residue chain is Pyridoxine 5'-phosphate synthase (245 aa).

Position 7 (N7) interacts with 3-amino-2-oxopropyl phosphate. 9–10 (DH) lines the 1-deoxy-D-xylulose 5-phosphate pocket. R18 is a binding site for 3-amino-2-oxopropyl phosphate. The active-site Proton acceptor is H43. Positions 45 and 50 each coordinate 1-deoxy-D-xylulose 5-phosphate. Residue E70 is the Proton acceptor of the active site. T100 lines the 1-deoxy-D-xylulose 5-phosphate pocket. The active-site Proton donor is H190. Residues G191 and 212 to 213 (GH) contribute to the 3-amino-2-oxopropyl phosphate site.

It belongs to the PNP synthase family. As to quaternary structure, homooctamer; tetramer of dimers.

It localises to the cytoplasm. The enzyme catalyses 3-amino-2-oxopropyl phosphate + 1-deoxy-D-xylulose 5-phosphate = pyridoxine 5'-phosphate + phosphate + 2 H2O + H(+). Its pathway is cofactor biosynthesis; pyridoxine 5'-phosphate biosynthesis; pyridoxine 5'-phosphate from D-erythrose 4-phosphate: step 5/5. In terms of biological role, catalyzes the complicated ring closure reaction between the two acyclic compounds 1-deoxy-D-xylulose-5-phosphate (DXP) and 3-amino-2-oxopropyl phosphate (1-amino-acetone-3-phosphate or AAP) to form pyridoxine 5'-phosphate (PNP) and inorganic phosphate. The chain is Pyridoxine 5'-phosphate synthase from Prochlorococcus marinus (strain NATL2A).